The primary structure comprises 564 residues: MFEDNNQKRPLYIPYAGPALLETPLLNKGSAFTSEERSNFNLEGLLPQNIETIEEQAERAYRQFMAFGNDMDKHIYLRNIQDTNETLFYRLLTNHLTEMLPVIYTPTVGKACEEFSNIYRRARGLFISYPDKDRIDDMLQNATKQNVKVIVVTDGERILGLGDQGIGGMGIPIGKLSLYTACGGISPAYCLPVVLDVGTNNQQLLNDPFYMGWRNPRISGEEYAEFVDAFIQAVKRRWPDILLQFEDFAQNNAMPLLNRYKNELCCFNDDIQGTAAVTLGSLIAACKASGAKLSEKRVAFLGAGSAGCGIAEQIVAQMKAEGLTDAQARSRVFMVDRFGLITDKIPNQLDFQRRLSQPVERIADWPVGDNISLLEVMEHGRPDILIGVSGQPGLFTEEVVKTMHKHCARPIIFPLSNPTSRVEATPADLIRWTDGQALVATGSPFAPVEYKGKRYVIAQCNNSFIFPGIGLGVIAAGATRVTDAMLMSASRALAECSPLVKGEEGSLLPDLADIHQVSRYIAKMVAKTAMLQGKAVQTPDEVIDQSIEANFWRPEYRRYRRTSF.

Tyr104 serves as the catalytic Proton donor. Arg157 lines the NAD(+) pocket. Lys175 acts as the Proton acceptor in catalysis. Glu246, Asp247, and Asp270 together coordinate a divalent metal cation. NAD(+) is bound by residues Asp270 and Asn417.

The protein belongs to the malic enzymes family. Homotetramer. Requires Mg(2+) as cofactor. The cofactor is Mn(2+).

The enzyme catalyses (S)-malate + NAD(+) = pyruvate + CO2 + NADH. It catalyses the reaction oxaloacetate + H(+) = pyruvate + CO2. The chain is NAD-dependent malic enzyme from Aeromonas hydrophila subsp. hydrophila (strain ATCC 7966 / DSM 30187 / BCRC 13018 / CCUG 14551 / JCM 1027 / KCTC 2358 / NCIMB 9240 / NCTC 8049).